Reading from the N-terminus, the 344-residue chain is Aurora kinase B (344 aa).

Thr-35 bears the Phosphothreonine mark. Ser-62 bears the Phosphoserine mark. Thr-64 is modified (phosphothreonine). The Protein kinase domain maps to 77–327 (FEIGRPLGKG…LAQVSAHPWV (251 aa)). Residues 83–91 (LGKGKFGNV) and Lys-106 contribute to the ATP site. Asp-200 acts as the Proton acceptor in catalysis. Lys-215 bears the N6-acetyllysine mark. Ser-227 carries the phosphoserine modification. The residue at position 232 (Thr-232) is a Phosphothreonine; by autocatalysis.

Belongs to the protein kinase superfamily. Ser/Thr protein kinase family. Aurora subfamily. In terms of assembly, component of the chromosomal passenger complex (CPC) composed of at least BIRC5/survivin, CDCA8/borealin, INCENP, AURKB or AURKC; predominantly independent AURKB- and AURKC-containing complexes exist. Associates with RACGAP1 during M phase. Interacts with SPDYC; this interaction may be required for proper localization of active, Thr-232-phosphorylated AURKB form during prometaphase and metaphase. Interacts with p53/TP53. Interacts (via the middle kinase domain) with NOC2L (via the N- and C-terminus domains). Interacts with CDCA1. Interacts with EVI5. Interacts with JTB. Interacts with NDC80. Interacts with PSMA3. Interacts with RNF2/RING1B. Interacts with SEPTIN1. Interacts with SIRT2. Interacts with TACC1. Interacts with TTC28. In terms of processing, the phosphorylation of Thr-232 requires the binding to INCENP and occurs by means of an autophosphorylation mechanism. Thr-232 phosphorylation is indispensable for the AURKB kinase activity. Post-translationally, acetylated at Lys-215 by KAT5 at kinetochores, increasing AURKB activity and promoting accurate chromosome segregation in mitosis. Ubiquitinated by different BCR (BTB-CUL3-RBX1) E3 ubiquitin ligase complexes. Ubiquitinated by the BCR(KLHL9-KLHL13) E3 ubiquitin ligase complex, ubiquitination leads to removal from mitotic chromosomes and is required for cytokinesis. During anaphase, the BCR(KLHL21) E3 ubiquitin ligase complex recruits the CPC complex from chromosomes to the spindle midzone and mediates the ubiquitination of AURKB. Ubiquitination of AURKB by BCR(KLHL21) E3 ubiquitin ligase complex may not lead to its degradation by the proteasome. Deubiquitinated by USP35; inhibiting CDH1-mediated degradation of AURKB.

Its subcellular location is the nucleus. The protein localises to the chromosome. It is found in the centromere. The protein resides in the kinetochore. It localises to the cytoplasm. Its subcellular location is the cytoskeleton. The protein localises to the spindle. It is found in the midbody. It catalyses the reaction L-seryl-[protein] + ATP = O-phospho-L-seryl-[protein] + ADP + H(+). The catalysed reaction is L-threonyl-[protein] + ATP = O-phospho-L-threonyl-[protein] + ADP + H(+). With respect to regulation, activity is greatly increased when AURKB is within the CPC complex. In particular, AURKB-phosphorylated INCENP acts as an activator of AURKB. Positive feedback between HASPIN and AURKB contributes to CPC localization. Its function is as follows. Serine/threonine-protein kinase component of the chromosomal passenger complex (CPC), a complex that acts as a key regulator of mitosis. The CPC complex has essential functions at the centromere in ensuring correct chromosome alignment and segregation and is required for chromatin-induced microtubule stabilization and spindle assembly. Involved in the bipolar attachment of spindle microtubules to kinetochores and is a key regulator for the onset of cytokinesis during mitosis. Required for central/midzone spindle assembly and cleavage furrow formation. Key component of the cytokinesis checkpoint, a process required to delay abscission to prevent both premature resolution of intercellular chromosome bridges and accumulation of DNA damage: phosphorylates CHMP4C, leading to retain abscission-competent VPS4 (VPS4A and/or VPS4B) at the midbody ring until abscission checkpoint signaling is terminated at late cytokinesis. AURKB phosphorylates the CPC complex subunits BIRC5/survivin, CDCA8/borealin and INCENP. Phosphorylation of INCENP leads to increased AURKB activity. Other known AURKB substrates involved in centromeric functions and mitosis are CENPA, DES/desmin, GPAF, KIF2C, NSUN2, RACGAP1, SEPTIN1, VIM/vimentin, HASPIN, and histone H3. A positive feedback loop involving HASPIN and AURKB contributes to localization of CPC to centromeres. Phosphorylation of VIM controls vimentin filament segregation in cytokinetic process, whereas histone H3 is phosphorylated at 'Ser-10' and 'Ser-28' during mitosis (H3S10ph and H3S28ph, respectively). AURKB is also required for kinetochore localization of BUB1 and SGO1. Phosphorylation of p53/TP53 negatively regulates its transcriptional activity. Key regulator of active promoters in resting B- and T-lymphocytes: acts by mediating phosphorylation of H3S28ph at active promoters in resting B-cells, inhibiting RNF2/RING1B-mediated ubiquitination of histone H2A and enhancing binding and activity of the USP16 deubiquitinase at transcribed genes. Acts as an inhibitor of CGAS during mitosis: catalyzes phosphorylation of the N-terminus of CGAS during the G2-M transition, blocking CGAS liquid phase separation and activation, and thereby preventing CGAS-induced autoimmunity. Phosphorylates KRT5 during anaphase and telophase. Phosphorylates ATXN10 which promotes phosphorylation of ATXN10 by PLK1 and may play a role in the regulation of cytokinesis and stimulating the proteasomal degradation of ATXN10. In Sus scrofa (Pig), this protein is Aurora kinase B (AURKB).